The chain runs to 230 residues: Fibrillarin-like rRNA/tRNA 2'-O-methyltransferase (230 aa).

Residues 87 to 88 (TT), 105 to 106 (EF), 130 to 131 (DA), and 150 to 153 (DVAQ) contribute to the S-adenosyl-L-methionine site.

It belongs to the methyltransferase superfamily. Fibrillarin family. Interacts with nop5. Component of box C/D small ribonucleoprotein (sRNP) particles that contain rpl7ae, FlpA and nop5, plus a guide RNA.

Its function is as follows. Involved in pre-rRNA and tRNA processing. Utilizes the methyl donor S-adenosyl-L-methionine to catalyze the site-specific 2'-hydroxyl methylation of ribose moieties in rRNA and tRNA. Site specificity is provided by a guide RNA that base pairs with the substrate. Methylation occurs at a characteristic distance from the sequence involved in base pairing with the guide RNA. The chain is Fibrillarin-like rRNA/tRNA 2'-O-methyltransferase from Methanococcus maripaludis (strain C6 / ATCC BAA-1332).